A 351-amino-acid polypeptide reads, in one-letter code: O-methyltransferase apf6 (351 aa).

Residues 231–232 (GG), 279–280 (NF), and R295 contribute to the S-adenosyl-L-methionine site. The active-site Proton acceptor is the H299.

This sequence belongs to the class I-like SAM-binding methyltransferase superfamily. Cation-independent O-methyltransferase family.

It functions in the pathway secondary metabolite biosynthesis. In terms of biological role, O-methyltransferase; part of the gene cluster that mediates the biosynthesis of the cyclic tetrapeptide apicidin F (APF). The non-ribosomal peptide synthetase apf1 incorporates four different amino acids to produce apicidin F: L-phenylalanine, D-pipecolic acid (D-pip), N-methoxy-L-tryptophan and L-2-aminooctanedioic acid. L-Phenylalanine is the only proteinogenic amino acid directly used by apf1. The 3 other apf1 substrates are non-proteinogenic and have to be modified by other enzymes of the cluster. Lysine is converted to delta-1-pyrroline-5-carboxylate (P5C) which is reduced to L-pipecolic acid (L-pip) by apf3. L-pip is epimerized to D-pip, probably by apf1 activity, prior to incorporation. L-Tryptophan is N-oxidyzed by one of the cytochrome P450 monooxygenases (apf7 or apf8), and further methylated at the hydroxy group by the O-methyltransferase apf6 to yield N-methoxy-L-tryptophan. The synthesis of the fourth apf1 substrate is more complex. The fatty acid synthase apf5 is involved in the synthesis of the octanoic acid backbone of L-2-aminooctanedioic acid by fixing one acetyl-CoA unit and three malonyl-CoA units. Then one of the cytochrome P450 monooxygenases (apf7 or apf8) may oxidize this backbone to 2-oxooctanoic acid. The aminotransferase apf4 is predicted to catalyze the exchange of the keto group with an amino group. The next step would be the oxidation of 2-aminooctanoic acid by one of the cytochrome P450 monooxygenases (apf7 or apf8). The last step is the oxidation of 2-amino-8-hydroxyoctanoic acid to 2-aminooctanedioic acid is catalyzed by the FAD-dependent monooxygenase apf9. The sequence is that of O-methyltransferase apf6 from Gibberella fujikuroi (strain CBS 195.34 / IMI 58289 / NRRL A-6831) (Bakanae and foot rot disease fungus).